Consider the following 943-residue polypeptide: Isoleucine--tRNA ligase (943 aa).

The 'HIGH' region signature appears at 59–69 (PYANGQIHLGH). Glutamate 577 contacts L-isoleucyl-5'-AMP. The short motif at 618 to 622 (KMSKS) is the 'KMSKS' region element. Lysine 621 lines the ATP pocket. The Zn(2+) site is built by cysteine 906, cysteine 909, cysteine 926, and cysteine 929.

Belongs to the class-I aminoacyl-tRNA synthetase family. IleS type 1 subfamily. Monomer. The cofactor is Zn(2+).

It is found in the cytoplasm. It catalyses the reaction tRNA(Ile) + L-isoleucine + ATP = L-isoleucyl-tRNA(Ile) + AMP + diphosphate. In terms of biological role, catalyzes the attachment of isoleucine to tRNA(Ile). As IleRS can inadvertently accommodate and process structurally similar amino acids such as valine, to avoid such errors it has two additional distinct tRNA(Ile)-dependent editing activities. One activity is designated as 'pretransfer' editing and involves the hydrolysis of activated Val-AMP. The other activity is designated 'posttransfer' editing and involves deacylation of mischarged Val-tRNA(Ile). This chain is Isoleucine--tRNA ligase, found in Xanthomonas axonopodis pv. citri (strain 306).